The following is a 274-amino-acid chain: Bis(5'-nucleosyl)-tetraphosphatase, symmetrical (274 aa).

This sequence belongs to the Ap4A hydrolase family.

The catalysed reaction is P(1),P(4)-bis(5'-adenosyl) tetraphosphate + H2O = 2 ADP + 2 H(+). Hydrolyzes diadenosine 5',5'''-P1,P4-tetraphosphate to yield ADP. This Shewanella sp. (strain MR-7) protein is Bis(5'-nucleosyl)-tetraphosphatase, symmetrical.